The sequence spans 164 residues: Photosystem II extrinsic protein V (164 aa).

The signal sequence occupies residues 1-27; that stretch reads MALKSKFLVGSILATFILNGFSSPAQA. Heme c-binding residues include Cys-64, Cys-67, His-68, and His-119.

It belongs to the cytochrome c family. PsbV subfamily. In terms of assembly, PSII is composed of 1 copy each of membrane proteins PsbA, PsbB, PsbC, PsbD, PsbE, PsbF, PsbH, PsbI, PsbJ, PsbK, PsbL, PsbM, PsbT, PsbY, PsbZ, Psb30/Ycf12, at least 3 peripheral proteins of the oxygen-evolving complex and a large number of cofactors. It forms dimeric complexes. It depends on heme c as a cofactor.

The protein resides in the plastid. The protein localises to the chloroplast thylakoid membrane. In terms of biological role, one of the extrinsic, lumenal subunits of photosystem II (PSII). PSII is a light-driven water plastoquinone oxidoreductase, using light energy to abstract electrons from H(2)O, generating a proton gradient subsequently used for ATP formation. The extrinsic proteins stabilize the structure of photosystem II oxygen-evolving complex (OEC), the ion environment of oxygen evolution and protect the OEC against heat-induced inactivation. This Emiliania huxleyi (Coccolithophore) protein is Photosystem II extrinsic protein V.